The following is a 246-amino-acid chain: Sec-independent protein translocase protein TatB (246 aa).

The chain crosses the membrane as a helical span at residues 1-21 (MFDIGWSELLVIAVVLIVVVG). Disordered regions lie at residues 94–122 (SDLQ…APLV), 179–204 (SRSK…PKPT), and 225–246 (VADA…KDEA). Composition is skewed to polar residues over residues 97-112 (QKAT…TAAP) and 187-197 (PETTVATNASE).

This sequence belongs to the TatB family. As to quaternary structure, the Tat system comprises two distinct complexes: a TatABC complex, containing multiple copies of TatA, TatB and TatC subunits, and a separate TatA complex, containing only TatA subunits. Substrates initially bind to the TatABC complex, which probably triggers association of the separate TatA complex to form the active translocon.

Its subcellular location is the cell inner membrane. In terms of biological role, part of the twin-arginine translocation (Tat) system that transports large folded proteins containing a characteristic twin-arginine motif in their signal peptide across membranes. Together with TatC, TatB is part of a receptor directly interacting with Tat signal peptides. TatB may form an oligomeric binding site that transiently accommodates folded Tat precursor proteins before their translocation. The chain is Sec-independent protein translocase protein TatB from Agrobacterium fabrum (strain C58 / ATCC 33970) (Agrobacterium tumefaciens (strain C58)).